We begin with the raw amino-acid sequence, 595 residues long: Transketolase-like protein 1 (595 aa).

93-95 (GWP) contributes to the thiamine diphosphate binding site. Residues Asp125, Asn155, and Ile157 each coordinate Mg(2+). Asn155 lines the thiamine diphosphate pocket. 3 residues coordinate thiamine diphosphate: Lys217, Glu339, and Phe365. Residue Glu339 is the Proton donor of the active site. The substrate site is built by His389 and Asp397. His401 is a thiamine diphosphate binding site.

The protein belongs to the transketolase family. Homodimer. Mg(2+) is required as a cofactor. Ca(2+) serves as cofactor. The cofactor is Mn(2+). Requires Co(2+) as cofactor. It depends on thiamine diphosphate as a cofactor. Not expressed in the embryonic neocortex.

It is found in the cytoplasm. The enzyme catalyses D-sedoheptulose 7-phosphate + D-glyceraldehyde 3-phosphate = aldehydo-D-ribose 5-phosphate + D-xylulose 5-phosphate. Functionally, catalyzes the transfer of a two-carbon ketol group from a ketose donor to an aldose acceptor, via a covalent intermediate with the cofactor thiamine pyrophosphate. The sequence is that of Transketolase-like protein 1 from Mus musculus (Mouse).